The primary structure comprises 598 residues: Transcription factor COE3 (598 aa).

Positions 1 to 23 (MFGIQENIPRGGTTMKEEPLGGG) are disordered. The tract at residues 63-66 (RKSN) is interaction with DNA. A C5-type zinc finger spans residues 151-170 (CRVLLTHEIMCSRCCDKKSC). Interaction with DNA regions lie at residues 197–204 (NCLKNAGN) and 236–239 (NNSK). An IPT/TIG domain is found at 264–347 (PCIKAISPSE…KGAPGRFVYT (84 aa)). The disordered stretch occupies residues 452–483 (TSQANDQVGYSRNTSSVSPRGYVPSSTPQQSN).

The protein belongs to the COE family. In terms of assembly, forms either a homodimer or a heterodimer with a related family member.

It localises to the nucleus. Functionally, acts as a transcriptional activator. The chain is Transcription factor COE3 (coe3) from Xenopus laevis (African clawed frog).